The sequence spans 295 residues: 4-hydroxy-tetrahydrodipicolinate synthase (295 aa).

Thr45 contributes to the pyruvate binding site. The active-site Proton donor/acceptor is Tyr131. Lys159 (schiff-base intermediate with substrate) is an active-site residue. A pyruvate-binding site is contributed by Val202.

The protein belongs to the DapA family. In terms of assembly, homotetramer; dimer of dimers.

Its subcellular location is the cytoplasm. The catalysed reaction is L-aspartate 4-semialdehyde + pyruvate = (2S,4S)-4-hydroxy-2,3,4,5-tetrahydrodipicolinate + H2O + H(+). The protein operates within amino-acid biosynthesis; L-lysine biosynthesis via DAP pathway; (S)-tetrahydrodipicolinate from L-aspartate: step 3/4. Functionally, catalyzes the condensation of (S)-aspartate-beta-semialdehyde [(S)-ASA] and pyruvate to 4-hydroxy-tetrahydrodipicolinate (HTPA). The polypeptide is 4-hydroxy-tetrahydrodipicolinate synthase (Methanothrix thermoacetophila (strain DSM 6194 / JCM 14653 / NBRC 101360 / PT) (Methanosaeta thermophila)).